We begin with the raw amino-acid sequence, 436 residues long: Bystin (436 aa).

The residue at position 145 (Thr145) is a Phosphothreonine. Phosphoserine occurs at positions 148 and 152.

Belongs to the bystin family.

Its subcellular location is the nucleus. The protein localises to the nucleolus. Its function is as follows. Required for processing of 20S pre-rRNA precursor and biogenesis of 40S ribosomal subunits. The chain is Bystin (bys) from Drosophila melanogaster (Fruit fly).